The following is a 370-amino-acid chain: tRNA/tmRNA (uracil-C(5))-methyltransferase (370 aa).

Positions 195, 221, 226, 242, and 302 each coordinate S-adenosyl-L-methionine. Cys-327 (nucleophile) is an active-site residue. The active-site Proton acceptor is the Glu-361.

The protein belongs to the class I-like SAM-binding methyltransferase superfamily. RNA M5U methyltransferase family. TrmA subfamily.

The catalysed reaction is uridine(54) in tRNA + S-adenosyl-L-methionine = 5-methyluridine(54) in tRNA + S-adenosyl-L-homocysteine + H(+). It catalyses the reaction uridine(341) in tmRNA + S-adenosyl-L-methionine = 5-methyluridine(341) in tmRNA + S-adenosyl-L-homocysteine + H(+). Its function is as follows. Dual-specificity methyltransferase that catalyzes the formation of 5-methyluridine at position 54 (m5U54) in all tRNAs, and that of position 341 (m5U341) in tmRNA (transfer-mRNA). This Wolinella succinogenes (strain ATCC 29543 / DSM 1740 / CCUG 13145 / JCM 31913 / LMG 7466 / NCTC 11488 / FDC 602W) (Vibrio succinogenes) protein is tRNA/tmRNA (uracil-C(5))-methyltransferase.